Here is a 109-residue protein sequence, read N- to C-terminus: ATP-dependent Clp protease adapter protein ClpS (109 aa).

Residues 1-20 (MAERKQGGQGNGVGSSVVTE) form a disordered region.

This sequence belongs to the ClpS family. Binds to the N-terminal domain of the chaperone ClpA.

Functionally, involved in the modulation of the specificity of the ClpAP-mediated ATP-dependent protein degradation. This is ATP-dependent Clp protease adapter protein ClpS from Caulobacter vibrioides (strain NA1000 / CB15N) (Caulobacter crescentus).